Consider the following 311-residue polypeptide: HPr kinase/phosphorylase (311 aa).

Residues histidine 139 and lysine 160 contribute to the active site. 154–161 (GESGVGKS) lines the ATP pocket. Serine 161 lines the Mg(2+) pocket. The Proton acceptor; for phosphorylation activity. Proton donor; for dephosphorylation activity role is filled by aspartate 178. The tract at residues 202-211 (IEIRGIGILD) is important for the catalytic mechanism of both phosphorylation and dephosphorylation. Residue glutamate 203 participates in Mg(2+) binding. The active site involves arginine 244. An important for the catalytic mechanism of dephosphorylation region spans residues 265 to 270 (PVRPGR).

The protein belongs to the HPrK/P family. Homohexamer. The cofactor is Mg(2+).

The enzyme catalyses [HPr protein]-L-serine + ATP = [HPr protein]-O-phospho-L-serine + ADP + H(+). The catalysed reaction is [HPr protein]-O-phospho-L-serine + phosphate + H(+) = [HPr protein]-L-serine + diphosphate. Catalyzes the ATP- as well as the pyrophosphate-dependent phosphorylation of a specific serine residue in HPr, a phosphocarrier protein of the phosphoenolpyruvate-dependent sugar phosphotransferase system (PTS). HprK/P also catalyzes the pyrophosphate-producing, inorganic phosphate-dependent dephosphorylation (phosphorolysis) of seryl-phosphorylated HPr (P-Ser-HPr). The two antagonistic activities of HprK/P are regulated by several intracellular metabolites, which change their concentration in response to the absence or presence of rapidly metabolisable carbon sources (glucose, fructose, etc.) in the growth medium. Therefore, by controlling the phosphorylation state of HPr, HPrK/P is a sensor enzyme that plays a major role in the regulation of carbon metabolism and sugar transport: it mediates carbon catabolite repression (CCR), and regulates PTS-catalyzed carbohydrate uptake and inducer exclusion. This chain is HPr kinase/phosphorylase, found in Caldicellulosiruptor bescii (strain ATCC BAA-1888 / DSM 6725 / KCTC 15123 / Z-1320) (Anaerocellum thermophilum).